The sequence spans 271 residues: Purine nucleoside phosphorylase 1 (271 aa).

Residues Ser-28, His-59, 79–81 (RFH), and Ala-111 contribute to the phosphate site. Residue Ser-28 is modified to Phosphoserine. Glu-191 contributes to the a purine D-ribonucleoside binding site. Ser-210 serves as a coordination point for phosphate. Asn-233 serves as a coordination point for a purine D-ribonucleoside.

The protein belongs to the PNP/MTAP phosphorylase family. In terms of assembly, homotrimer.

It catalyses the reaction a purine 2'-deoxy-D-ribonucleoside + phosphate = a purine nucleobase + 2-deoxy-alpha-D-ribose 1-phosphate. The protein operates within purine metabolism; purine nucleoside salvage. The purine nucleoside phosphorylases catalyze the phosphorolytic breakdown of the N-glycosidic bond in the beta-(deoxy)ribonucleoside molecules, with the formation of the corresponding free purine bases and pentose-1-phosphate. Cleaves guanosine, inosine, 2'-deoxyguanosine and 2'-deoxyinosine. This Bacillus subtilis (strain 168) protein is Purine nucleoside phosphorylase 1 (punA).